Reading from the N-terminus, the 457-residue chain is UDP-N-acetylmuramoyl-tripeptide--D-alanyl-D-alanine ligase (457 aa).

109 to 115 (GSSGKTT) is a binding site for ATP.

The protein belongs to the MurCDEF family. MurF subfamily.

The protein resides in the cytoplasm. The enzyme catalyses D-alanyl-D-alanine + UDP-N-acetyl-alpha-D-muramoyl-L-alanyl-gamma-D-glutamyl-meso-2,6-diaminopimelate + ATP = UDP-N-acetyl-alpha-D-muramoyl-L-alanyl-gamma-D-glutamyl-meso-2,6-diaminopimeloyl-D-alanyl-D-alanine + ADP + phosphate + H(+). It functions in the pathway cell wall biogenesis; peptidoglycan biosynthesis. In terms of biological role, involved in cell wall formation. Catalyzes the final step in the synthesis of UDP-N-acetylmuramoyl-pentapeptide, the precursor of murein. This is UDP-N-acetylmuramoyl-tripeptide--D-alanyl-D-alanine ligase from Haemophilus influenzae (strain ATCC 51907 / DSM 11121 / KW20 / Rd).